The following is a 210-amino-acid chain: Imidazole glycerol phosphate synthase subunit HisH 1 (210 aa).

A Glutamine amidotransferase type-1 domain is found at Lys-3–Val-210. Cys-82 functions as the Nucleophile in the catalytic mechanism. Catalysis depends on residues His-189 and Glu-191.

In terms of assembly, heterodimer of HisH and HisF.

It localises to the cytoplasm. The catalysed reaction is 5-[(5-phospho-1-deoxy-D-ribulos-1-ylimino)methylamino]-1-(5-phospho-beta-D-ribosyl)imidazole-4-carboxamide + L-glutamine = D-erythro-1-(imidazol-4-yl)glycerol 3-phosphate + 5-amino-1-(5-phospho-beta-D-ribosyl)imidazole-4-carboxamide + L-glutamate + H(+). It carries out the reaction L-glutamine + H2O = L-glutamate + NH4(+). Its pathway is amino-acid biosynthesis; L-histidine biosynthesis; L-histidine from 5-phospho-alpha-D-ribose 1-diphosphate: step 5/9. Functionally, IGPS catalyzes the conversion of PRFAR and glutamine to IGP, AICAR and glutamate. The HisH subunit provides the glutamine amidotransferase activity that produces the ammonia necessary to HisF for the synthesis of IGP and AICAR. In Parasynechococcus marenigrum (strain WH8102), this protein is Imidazole glycerol phosphate synthase subunit HisH 1 (hisH1).